The primary structure comprises 198 residues: Ribonuclease HII (198 aa).

Positions 6–198 (EQIAGVDEVG…APCQASLLPD (193 aa)) constitute an RNase H type-2 domain. The a divalent metal cation site is built by D12, E13, and D108.

Belongs to the RNase HII family. The cofactor is Mn(2+). Requires Mg(2+) as cofactor.

It localises to the cytoplasm. The enzyme catalyses Endonucleolytic cleavage to 5'-phosphomonoester.. Endonuclease that specifically degrades the RNA of RNA-DNA hybrids. The sequence is that of Ribonuclease HII from Acaryochloris marina (strain MBIC 11017).